Here is an 829-residue protein sequence, read N- to C-terminus: Dipeptidyl peptidase family member 2 (829 aa).

Topologically, residues 1–27 are cytoplasmic; that stretch reads MENDNYDVEEQGCSVFNGKHGYFARSC. The helical; Signal-anchor for type II membrane protein transmembrane segment at 28–48 threads the bilayer; that stretch reads CVVFILIICVIFVFSVIFTFM. At 49–829 the chain is on the extracellular side; the sequence is QNPINLNSDN…DCFKSNLDLL (781 aa). 6 N-linked (GlcNAc...) asparagine glycosylation sites follow: N61, N66, N183, N209, N314, and N359. C514 and C533 are oxidised to a cystine. S691 serves as the catalytic Charge relay system. A disulfide bridge links C711 with C821. N754 is a glycosylation site (N-linked (GlcNAc...) asparagine). Residues D768 and H800 each act as charge relay system in the active site.

It belongs to the peptidase S9B family. DPPIV subfamily.

Its subcellular location is the cell membrane. Functionally, removes N-terminal dipeptides sequentially from polypeptides. Essential for control of distal tip cell migration. This chain is Dipeptidyl peptidase family member 2 (dpf-2), found in Caenorhabditis elegans.